A 111-amino-acid chain; its full sequence is Pyrimidine/purine nucleoside phosphorylase 1 (111 aa).

It belongs to the nucleoside phosphorylase PpnP family.

It catalyses the reaction a purine D-ribonucleoside + phosphate = a purine nucleobase + alpha-D-ribose 1-phosphate. The enzyme catalyses adenosine + phosphate = alpha-D-ribose 1-phosphate + adenine. The catalysed reaction is cytidine + phosphate = cytosine + alpha-D-ribose 1-phosphate. It carries out the reaction guanosine + phosphate = alpha-D-ribose 1-phosphate + guanine. It catalyses the reaction inosine + phosphate = alpha-D-ribose 1-phosphate + hypoxanthine. The enzyme catalyses thymidine + phosphate = 2-deoxy-alpha-D-ribose 1-phosphate + thymine. The catalysed reaction is uridine + phosphate = alpha-D-ribose 1-phosphate + uracil. It carries out the reaction xanthosine + phosphate = alpha-D-ribose 1-phosphate + xanthine. Functionally, catalyzes the phosphorolysis of diverse nucleosides, yielding D-ribose 1-phosphate and the respective free bases. Can use uridine, adenosine, guanosine, cytidine, thymidine, inosine and xanthosine as substrates. Also catalyzes the reverse reactions. The protein is Pyrimidine/purine nucleoside phosphorylase 1 of Psychrobacter cryohalolentis (strain ATCC BAA-1226 / DSM 17306 / VKM B-2378 / K5).